Here is a 291-residue protein sequence, read N- to C-terminus: Proteasome subunit beta (291 aa).

Residues M1–G57 constitute a propeptide, removed in mature form; by autocatalysis. T58 functions as the Nucleophile in the catalytic mechanism.

It belongs to the peptidase T1B family. In terms of assembly, the 20S proteasome core is composed of 14 alpha and 14 beta subunits that assemble into four stacked heptameric rings, resulting in a barrel-shaped structure. The two inner rings, each composed of seven catalytic beta subunits, are sandwiched by two outer rings, each composed of seven alpha subunits. The catalytic chamber with the active sites is on the inside of the barrel. Has a gated structure, the ends of the cylinder being occluded by the N-termini of the alpha-subunits. Is capped by the proteasome-associated ATPase, ARC.

It localises to the cytoplasm. It carries out the reaction Cleavage of peptide bonds with very broad specificity.. The protein operates within protein degradation; proteasomal Pup-dependent pathway. The formation of the proteasomal ATPase ARC-20S proteasome complex, likely via the docking of the C-termini of ARC into the intersubunit pockets in the alpha-rings, may trigger opening of the gate for substrate entry. Interconversion between the open-gate and close-gate conformations leads to a dynamic regulation of the 20S proteasome proteolysis activity. Its function is as follows. Component of the proteasome core, a large protease complex with broad specificity involved in protein degradation. The polypeptide is Proteasome subunit beta (Mycobacterium tuberculosis (strain ATCC 25177 / H37Ra)).